Consider the following 152-residue polypeptide: Endoribonuclease YbeY (152 aa).

Zn(2+) contacts are provided by H117, H121, and H127.

It belongs to the endoribonuclease YbeY family. Zn(2+) serves as cofactor.

It is found in the cytoplasm. Its function is as follows. Single strand-specific metallo-endoribonuclease involved in late-stage 70S ribosome quality control and in maturation of the 3' terminus of the 16S rRNA. This Borreliella afzelii (strain PKo) (Borrelia afzelii) protein is Endoribonuclease YbeY.